We begin with the raw amino-acid sequence, 301 residues long: Acetyl-coenzyme A carboxylase carboxyl transferase subunit beta (301 aa).

In terms of domain architecture, CoA carboxyltransferase N-terminal spans 25–294 (LWIKCPETGE…SAANDMNGGA (270 aa)).

The protein belongs to the AccD/PCCB family. Acetyl-CoA carboxylase is a heterohexamer composed of biotin carboxyl carrier protein (AccB), biotin carboxylase (AccC) and two subunits each of ACCase subunit alpha (AccA) and ACCase subunit beta (AccD).

The protein resides in the cytoplasm. The enzyme catalyses N(6)-carboxybiotinyl-L-lysyl-[protein] + acetyl-CoA = N(6)-biotinyl-L-lysyl-[protein] + malonyl-CoA. Its pathway is lipid metabolism; malonyl-CoA biosynthesis; malonyl-CoA from acetyl-CoA: step 1/1. Functionally, component of the acetyl coenzyme A carboxylase (ACC) complex. Biotin carboxylase (BC) catalyzes the carboxylation of biotin on its carrier protein (BCCP) and then the CO(2) group is transferred by the transcarboxylase to acetyl-CoA to form malonyl-CoA. This Rhizobium etli (strain CIAT 652) protein is Acetyl-coenzyme A carboxylase carboxyl transferase subunit beta.